Consider the following 125-residue polypeptide: Large ribosomal subunit protein bL12 (125 aa).

This sequence belongs to the bacterial ribosomal protein bL12 family. As to quaternary structure, homodimer. Part of the ribosomal stalk of the 50S ribosomal subunit. Forms a multimeric L10(L12)X complex, where L10 forms an elongated spine to which 2 to 4 L12 dimers bind in a sequential fashion. Binds GTP-bound translation factors.

Its function is as follows. Forms part of the ribosomal stalk which helps the ribosome interact with GTP-bound translation factors. Is thus essential for accurate translation. The chain is Large ribosomal subunit protein bL12 from Helicobacter pylori (strain ATCC 700392 / 26695) (Campylobacter pylori).